We begin with the raw amino-acid sequence, 514 residues long: Beta-secretase 2 (514 aa).

Positions Met-1 to Ser-19 are cleaved as a signal peptide. A propeptide spanning residues Ala-20–Leu-62 is cleaved from the precursor. Topologically, residues Ala-20 to Tyr-469 are extracellular. The 338-residue stretch at Tyr-88 to Ala-425 folds into the Peptidase A1 domain. Asp-106 is an active-site residue. The N-linked (GlcNAc...) asparagine glycan is linked to Asn-166. 3 cysteine pairs are disulfide-bonded: Cys-229/Cys-429, Cys-288/Cys-453, and Cys-340/Cys-389. Residue Asp-299 is part of the active site. A glycan (N-linked (GlcNAc...) asparagine) is linked at Asn-362. Residues Ala-470–Leu-490 traverse the membrane as a helical segment. Topologically, residues His-491–Lys-514 are cytoplasmic.

This sequence belongs to the peptidase A1 family. As to quaternary structure, monomer. Interacts with RTN3 and RTN4. In terms of processing, undergoes autoproteolytic cleavage. Glycosylated. As to expression, high expression in pancreatic islets. Expressed at much lower levels in the pituitary, colon, and ovaries and is nearly absent from all the other tissues.

The protein resides in the cell membrane. It is found in the golgi apparatus. Its subcellular location is the endoplasmic reticulum. The protein localises to the endosome. It localises to the melanosome. The catalysed reaction is Broad endopeptidase specificity. Cleaves Glu-Val-Asn-Leu-|-Asp-Ala-Glu-Phe in the Swedish variant of Alzheimer's amyloid precursor protein.. Functionally, responsible for the proteolytic processing of the amyloid precursor protein (APP). Cleaves APP, between residues 690 and 691, leading to the generation and extracellular release of beta-cleaved soluble APP, and a corresponding cell-associated C-terminal fragment which is later released by gamma-secretase. It has also been shown that it can cleave APP between residues 671 and 672. Involved in the proteolytic shedding of PMEL at early stages of melanosome biogenesis. Cleaves PMEL within the M-beta fragment to release the amyloidogenic PMEL luminal fragment containing M-alpha and a small portion of M-beta N-terminus. This is a prerequisite step for subsequent processing and assembly of PMEL fibrils into amyloid sheets. Responsible also for the proteolytic processing of CLTRN in pancreatic beta cells. The chain is Beta-secretase 2 (Bace2) from Mus musculus (Mouse).